A 340-amino-acid chain; its full sequence is Pre-mRNA-splicing factor cwf17 (340 aa).

7 WD repeats span residues 48 to 87, 91 to 130, 133 to 173, 175 to 214, 217 to 256, 267 to 306, and 308 to 339; these read GHTA…KNYG, GCKG…KIRK, GHAG…CIKT, EEKY…CSHV, GHKD…SAQR, GQEH…RYVL, and GHEG…LGEL.

As to quaternary structure, belongs to the 40S cdc5-associated complex (or cwf complex), a spliceosome sub-complex reminiscent of a late-stage spliceosome composed of the U2, U5 and U6 snRNAs and at least brr2, cdc5, cwf2/prp3, cwf3/syf1, cwf4/syf3, cwf5/ecm2, spp42/cwf6, cwf7/spf27, cwf8, cwf9, cwf10, cwf11, cwf12, prp45/cwf13, cwf14, cwf15, cwf16, cwf17, cwf18, cwf19, cwf20, cwf21, cwf22, cwf23, cwf24, cwf25, cwf26, cyp7/cwf27, cwf28, cwf29/ist3, lea1, msl1, prp5/cwf1, prp10, prp12/sap130, prp17, prp22, sap61, sap62, sap114, sap145, slu7, smb1, smd1, smd3, smf1, smg1 and syf2.

It is found in the nucleus. Functionally, involved in mRNA splicing where it associates with cdc5 and the other cwf proteins as part of the spliceosome. This is Pre-mRNA-splicing factor cwf17 (cwf17) from Schizosaccharomyces pombe (strain 972 / ATCC 24843) (Fission yeast).